Here is a 290-residue protein sequence, read N- to C-terminus: ATP synthase gamma chain (290 aa).

The protein belongs to the ATPase gamma chain family. As to quaternary structure, F-type ATPases have 2 components, CF(1) - the catalytic core - and CF(0) - the membrane proton channel. CF(1) has five subunits: alpha(3), beta(3), gamma(1), delta(1), epsilon(1). CF(0) has three main subunits: a, b and c.

The protein resides in the cell inner membrane. In terms of biological role, produces ATP from ADP in the presence of a proton gradient across the membrane. The gamma chain is believed to be important in regulating ATPase activity and the flow of protons through the CF(0) complex. This Desulfotalea psychrophila (strain LSv54 / DSM 12343) protein is ATP synthase gamma chain.